A 363-amino-acid chain; its full sequence is G-protein coupled receptor 6 (363 aa).

The Extracellular segment spans residues 1–75 (MNASAAALNE…SGLLLSAVNP (75 aa)). N-linked (GlcNAc...) asparagine glycans are attached at residues asparagine 2 and asparagine 9. Residues 29–48 (GAPDTGEWGPPAASAALGGG) are disordered. Asparagine 52 is a glycosylation site (N-linked (GlcNAc...) asparagine). Residues 76–95 (WDVLLCVSGTVIAGENALVV) form a helical membrane-spanning segment. Residues 96–107 (ALIASTPALRTP) are Cytoplasmic-facing. The chain crosses the membrane as a helical span at residues 108–131 (MFVLVGSLATADLLAGCGLILHFV). Over 132 to 143 (FQYVVPSETVSL) the chain is Extracellular. The chain crosses the membrane as a helical span at residues 144-165 (LMVGFLVASFAASVSSLLAITV). The Cytoplasmic segment spans residues 166 to 186 (DRYLSLYNALTYYSRRTLLGV). The helical transmembrane segment at 187–206 (HLLLAATWTVSLGLGLLPVL) threads the bilayer. Over 207-231 (GWNCLADRTSCSVVRPLTRSHVALL) the chain is Extracellular. A helical membrane pass occupies residues 232–250 (STSFFVVFGIMLHLYVRIC). The Cytoplasmic portion of the chain corresponds to 251–278 (QVVWRHAHQIALQQHCLAPPHLAATRKG). Residues 279 to 305 (VGTLAVVLGTFGASWLPFAIYCVVGSQ) traverse the membrane as a helical segment. Residues 306 to 310 (EDPAI) lie on the Extracellular side of the membrane. A helical transmembrane segment spans residues 311 to 332 (YTYATLLPATYNSMINPIIYAF). Topologically, residues 333–363 (RNQEIQRALWLLFCGCFQSKVPFRSRSPSEV) are cytoplasmic. Residue cysteine 346 is the site of S-palmitoyl cysteine attachment. Residues serine 357, serine 359, and serine 361 each carry the phosphoserine modification.

Belongs to the G-protein coupled receptor 1 family. In terms of tissue distribution, mainly expressed in the brain. Selectively expressed in striatopallidal neurons in the striatum.

The protein localises to the cell membrane. In terms of biological role, orphan receptor with constitutive G(s) signaling activity that activate cyclic AMP. Promotes neurite outgrowth and blocks myelin inhibition in neurons. The protein is G-protein coupled receptor 6 (Gpr6) of Mus musculus (Mouse).